Here is a 177-residue protein sequence, read N- to C-terminus: Iron-sulfur cluster assembly protein SufA (177 aa).

The signal sequence occupies residues 1-18; sequence MTIHIFLCFLLILKIVNA. [4Fe-4S] cluster is bound by residues Cys101, Cys169, and Cys171.

This sequence belongs to the HesB/IscA family. Homodimer. Homotetramer formation is observed in vitro.

The protein resides in the plastid. It localises to the apicoplast. It participates in cofactor biosynthesis; iron-sulfur cluster biosynthesis. Participates in the sulfur mobilization (SUF) pathway for iron-sulfur (Fe-S) cluster biogenesis. Involved in the pre-assembly of [4Fe-4S] clusters and their transfer to target proteins. The polypeptide is Iron-sulfur cluster assembly protein SufA (Plasmodium falciparum (isolate 3D7)).